Reading from the N-terminus, the 332-residue chain is 5,10-methylenetetrahydromethanopterin reductase (332 aa).

This sequence belongs to the mer family.

The protein resides in the cytoplasm. The catalysed reaction is 5-methyl-5,6,7,8-tetrahydromethanopterin + oxidized coenzyme F420-(gamma-L-Glu)(n) + H(+) = 5,10-methylenetetrahydromethanopterin + reduced coenzyme F420-(gamma-L-Glu)(n). The protein operates within metabolic intermediate metabolism; lactate oxidation. Catalyzes the oxidation of methyl-H(4)MPT to methylene-H(4)MPT. The protein is 5,10-methylenetetrahydromethanopterin reductase of Archaeoglobus fulgidus (strain ATCC 49558 / DSM 4304 / JCM 9628 / NBRC 100126 / VC-16).